Here is a 98-residue protein sequence, read N- to C-terminus: MPRSLKKGPFIDIKLEKRILDMNSRSEKKVLKTWSRSTMISPDFVGHTIAVHNGKTHVPVYVSDNMVGHKLGEFAPTRTFRGHAGGKAEKGGSAPKRK.

Residues 77 to 98 are disordered; sequence TRTFRGHAGGKAEKGGSAPKRK.

It belongs to the universal ribosomal protein uS19 family.

Protein S19 forms a complex with S13 that binds strongly to the 16S ribosomal RNA. In Chlorobium luteolum (strain DSM 273 / BCRC 81028 / 2530) (Pelodictyon luteolum), this protein is Small ribosomal subunit protein uS19.